We begin with the raw amino-acid sequence, 440 residues long: 3-phosphoshikimate 1-carboxyvinyltransferase (440 aa).

Positions 19, 20, and 24 each coordinate 3-phosphoshikimate. Position 19 (Lys19) interacts with phosphoenolpyruvate. 2 residues coordinate phosphoenolpyruvate: Gly92 and Arg121. Residues Ser166, Gln168, Asp315, and Lys342 each contribute to the 3-phosphoshikimate site. Residue Gln168 coordinates phosphoenolpyruvate. Asp315 (proton acceptor) is an active-site residue. Residues Arg346 and Arg399 each coordinate phosphoenolpyruvate.

This sequence belongs to the EPSP synthase family. As to quaternary structure, monomer.

It localises to the cytoplasm. It catalyses the reaction 3-phosphoshikimate + phosphoenolpyruvate = 5-O-(1-carboxyvinyl)-3-phosphoshikimate + phosphate. Its pathway is metabolic intermediate biosynthesis; chorismate biosynthesis; chorismate from D-erythrose 4-phosphate and phosphoenolpyruvate: step 6/7. Its function is as follows. Catalyzes the transfer of the enolpyruvyl moiety of phosphoenolpyruvate (PEP) to the 5-hydroxyl of shikimate-3-phosphate (S3P) to produce enolpyruvyl shikimate-3-phosphate and inorganic phosphate. The protein is 3-phosphoshikimate 1-carboxyvinyltransferase of Leptospira interrogans serogroup Icterohaemorrhagiae serovar Lai (strain 56601).